A 517-amino-acid chain; its full sequence is Sugar transport protein MST1 (517 aa).

The Cytoplasmic segment spans residues 1-25; sequence MAGGVIVANDGDGSAVDHGGRLTFS. The chain crosses the membrane as a helical span at residues 26–46; it reads VVITCLVAASGGLIFGYDVGI. Residues 47-83 are Extracellular-facing; the sequence is SGGVSTMEPFLRRFFPGVVRRMAEARPGNEYCVYDSQ. The chain crosses the membrane as a helical span at residues 84–104; sequence ALTAFTSSLYVAGLVASLVAS. The Cytoplasmic portion of the chain corresponds to 105–120; that stretch reads RVTRAMGRQAVMVMGG. A helical transmembrane segment spans residues 121-141; sequence ALFFAGGAVTGFAVNIAMLIV. Over 142-143 the chain is Extracellular; that stretch reads GR. A helical transmembrane segment spans residues 144–164; the sequence is MLLGFGVGFTNQAAPLFLAEM. The Cytoplasmic segment spans residues 165 to 170; the sequence is APTRWR. Residues 171-191 traverse the membrane as a helical segment; the sequence is GSLTAGFQFFLAVGVVIATVT. The Extracellular segment spans residues 192–203; it reads NYFASRVPWGWR. The chain crosses the membrane as a helical span at residues 204–224; it reads LSLGLAGAPAVVIFLGALFLT. Residues 225 to 288 are Cytoplasmic-facing; it reads DTPSSLVMRG…AARREYRPYL (64 aa). The helical transmembrane segment at 289–309 threads the bilayer; sequence VFAVAMPMFFQLTGVIVISFF. The Extracellular portion of the chain corresponds to 310-325; that stretch reads SPLVFRTVGFGSNAAL. A helical transmembrane segment spans residues 326–346; sequence MGNVILGAVNLVCLMLSTLVI. Over 347–352 the chain is Cytoplasmic; sequence DRYGRK. Residues 353 to 373 form a helical membrane-spanning segment; it reads VLFMVGGAIMIIAQVGVAWIM. Residues 374–389 are Extracellular-facing; the sequence is GAQVGKNGSEAMARPY. Residues 390–410 traverse the membrane as a helical segment; sequence AVAVVAFTCLHTAGFGWSWGP. Topologically, residues 411-430 are cytoplasmic; it reads LGWVIPGEIFPVDIRSAGQA. The helical transmembrane segment at 431-451 threads the bilayer; that stretch reads MNVSIGLGLTFVQTQSFLAML. Over 452 to 456 the chain is Extracellular; that stretch reads CRFRY. Residues 457–477 traverse the membrane as a helical segment; it reads GTFAYYAAWVAVMTVFIAVFL. Over 478-517 the chain is Cytoplasmic; the sequence is PETKGVPLESMATVWARHWYWKRFAREQPKTSADEPTGTY.

The protein belongs to the major facilitator superfamily. Sugar transporter (TC 2.A.1.1) family.

The protein resides in the membrane. Its function is as follows. Mediates active uptake of hexoses by sugar:proton symport. In Oryza sativa subsp. japonica (Rice), this protein is Sugar transport protein MST1.